The chain runs to 412 residues: MGKQQETILIIGAGIAGLTTSRLLTNNGIPNVVFEASTPDRSQGFAISLQEFGYSALLAALGDLPFSSLIRGVAPDRQIGGSGWIDQALRDNRTGEVLVAPDLTTAKQTIVRANRNALRHWIADCGEDELDVRYGHKLQRIEGRLGDVTAVFENNARYKGSLIIAADGVNSTVRSQILPNVVPETIPLIHYHGEFQLPHSAFDELIRPHSRQSNILVGVGDRFNTPLSICNITKSQVHLDWSYSRTVKGENDILYRPNVPSEEAKQIPPALLEELDTLCLAEPWKSFLNSESVKTHRVFHWTTRCVYITQDDARHAGEQGVVFVGDSWHAMPIFGGEGGNHALLDGVELADAIITSTSNSGKGSWDNVVKNYYGGAWKRSQDAVRRSTQRFFLLHRPATEWKEISEKKKQIA.

Positions 1-21 (MGKQQETILIIGAGIAGLTTS) are cleaved as a signal peptide. The FAD site is built by glutamate 35 and alanine 46. Residue asparagine 92 is glycosylated (N-linked (GlcNAc...) asparagine). Position 119 (arginine 119) interacts with FAD. N-linked (GlcNAc...) asparagine glycosylation is found at asparagine 170 and asparagine 231. The FAD site is built by aspartate 326 and glycine 339.

Belongs to the paxM FAD-dependent monooxygenase family. Requires FAD as cofactor.

The protein operates within secondary metabolite biosynthesis. FAD-dependent monooxygenase; part of the gene cluster that mediates the biosynthesis of neosartoricin B, a prenylated anthracenone that probably exhibits T-cell antiproliferative activity, suggestive of a physiological role as an immunosuppressive agent. The non-reducing polyketide synthase nscA probably synthesizes and cyclizes the decaketide backbone. The hydrolase nscB then mediates the product release through hydrolysis followed by spontaneous decarboxylation. The prenyltransferase nscD catalyzes the addition of the dimethylallyl group to the aromatic C5. The FAD-dependent monooxygenase nscC is then responsible for the stereospecific hydroxylation at C2. Neosartoricin B can be converted into two additional compounds neosartoricins C and D. Neosartoricin C is a spirocyclic compound that is cyclized through the attack of C3 hydroxyl on C14, followed by dehydration. On the other hand, neosartoricin D is a further cyclized compound in which attack of C2 on C14 in neosartoricin C results in the formation of the acetal-containing dioxabicyclo-octanone ring. Both of these compounds are novel and possibly represent related metabolites of the gene cluster. The protein is FAD-dependent monooxygenase nscC of Arthroderma benhamiae (strain ATCC MYA-4681 / CBS 112371) (Trichophyton mentagrophytes).